We begin with the raw amino-acid sequence, 314 residues long: Ribose-phosphate pyrophosphokinase (314 aa).

ATP-binding positions include 37 to 39 and 96 to 97; these read DGE and RQ. Positions 131 and 170 each coordinate Mg(2+). The active site involves Lys194. D-ribose 5-phosphate contacts are provided by residues Arg196, Asp220, and 224–228; that span reads DTGGT.

Belongs to the ribose-phosphate pyrophosphokinase family. Class I subfamily. As to quaternary structure, homohexamer. Requires Mg(2+) as cofactor.

The protein localises to the cytoplasm. It carries out the reaction D-ribose 5-phosphate + ATP = 5-phospho-alpha-D-ribose 1-diphosphate + AMP + H(+). It functions in the pathway metabolic intermediate biosynthesis; 5-phospho-alpha-D-ribose 1-diphosphate biosynthesis; 5-phospho-alpha-D-ribose 1-diphosphate from D-ribose 5-phosphate (route I): step 1/1. Functionally, involved in the biosynthesis of the central metabolite phospho-alpha-D-ribosyl-1-pyrophosphate (PRPP) via the transfer of pyrophosphoryl group from ATP to 1-hydroxyl of ribose-5-phosphate (Rib-5-P). This is Ribose-phosphate pyrophosphokinase from Vibrio cholerae serotype O1 (strain ATCC 39315 / El Tor Inaba N16961).